Here is a 333-residue protein sequence, read N- to C-terminus: Aquaporin-1 (333 aa).

A disordered region spans residues 1–26 (MQKMSEKPLYRAAENPTRNADRRAGR). 2 helical membrane passes run 85–105 (LAMF…HFTG) and 116–136 (FHGF…GGII). The NPA 1 signature appears at 137-139 (NPA). Helical transmembrane passes span 156 to 176 (LVLV…VYLI), 213 to 233 (TGAI…FLSI), and 245 to 265 (LFPF…SYSA). The NPA 2 motif lies at 270–272 (NPA). The helical transmembrane segment at 303–323 (WLFPYVGALFGAVMYQIFVGV) threads the bilayer.

It belongs to the MIP/aquaporin (TC 1.A.8) family.

It localises to the cell membrane. Its function is as follows. Aquaglyceroporin that may modulate the water content and osmolytes during anhydrobiosis. This chain is Aquaporin-1, found in Milnesium tardigradum (Water bear).